A 312-amino-acid chain; its full sequence is Olfactory receptor 6X1 (312 aa).

The Extracellular portion of the chain corresponds to 1–23; it reads MRNGTVITEFILLGFPVIQGLQT. N-linked (GlcNAc...) asparagine glycosylation is present at N3. A helical transmembrane segment spans residues 24–44; the sequence is PLFIAIFLTYILTLAGNGLII. The Cytoplasmic portion of the chain corresponds to 45-52; sequence ATVWAEPR. A helical membrane pass occupies residues 53–73; sequence LQIPMYFFLCNLSFLEIWYTT. Over 74–97 the chain is Extracellular; sequence TVIPKLLGTFVVARTVICMSCCLL. A disulfide bridge connects residues C95 and C187. The chain crosses the membrane as a helical span at residues 98-118; that stretch reads QAFFHFFVGTTEFLILTIMSF. The Cytoplasmic portion of the chain corresponds to 119 to 137; the sequence is DRYLTICNPLHHPTIMTSK. The helical transmembrane segment at 138-158 threads the bilayer; that stretch reads LCLQLALSSWVVGFTIVFCQT. Residues 159–195 are Extracellular-facing; sequence MLLIQLPFCGNNVISHFYCDVGPSLKAACIDTSILEL. Residues 196 to 215 form a helical membrane-spanning segment; it reads LGVIATILVIPGSLLFNMIS. At 216–235 the chain is on the cytoplasmic side; that stretch reads YIYILSAILRIPSATGHQKT. A helical transmembrane segment spans residues 236–256; that stretch reads FSTCASHLTVVSLLYGAVLFM. The Extracellular portion of the chain corresponds to 257 to 269; the sequence is YLRPTAHSSFKIN. Residues 270–290 form a helical membrane-spanning segment; sequence KVVSVLNTILTPLLNPFIYTI. At 291 to 312 the chain is on the cytoplasmic side; sequence RNKEVKGALRKAMTCPKTGHAK.

This sequence belongs to the G-protein coupled receptor 1 family.

It is found in the cell membrane. Its function is as follows. Odorant receptor. This Homo sapiens (Human) protein is Olfactory receptor 6X1 (OR6X1).